Reading from the N-terminus, the 193-residue chain is Zinc finger protein 740 (193 aa).

The tract at residues Ser-33–Ser-75 is disordered. Residue Lys-34 forms a Glycyl lysine isopeptide (Lys-Gly) (interchain with G-Cter in SUMO2) linkage. Ser-44 is modified (phosphoserine). A compositionally biased stretch (basic and acidic residues) spans His-55–Asp-69. C2H2-type zinc fingers lie at residues Phe-101–His-123 and Phe-129–His-151. Residues Tyr-157–Cys-179 form a C2H2-type 3; atypical zinc finger.

This sequence belongs to the krueppel C2H2-type zinc-finger protein family.

The protein localises to the nucleus. Functionally, may be involved in transcriptional regulation. The sequence is that of Zinc finger protein 740 (ZNF740) from Homo sapiens (Human).